An 890-amino-acid polypeptide reads, in one-letter code: Protein translocase subunit SecA (890 aa).

ATP contacts are provided by residues Gln85, 103–107, and Asp491; that span reads GEGKT.

This sequence belongs to the SecA family. In terms of assembly, monomer and homodimer. Part of the essential Sec protein translocation apparatus which comprises SecA, SecYEG and auxiliary proteins SecDF. Other proteins may also be involved.

It is found in the cell membrane. The protein resides in the cytoplasm. It carries out the reaction ATP + H2O + cellular proteinSide 1 = ADP + phosphate + cellular proteinSide 2.. In terms of biological role, part of the Sec protein translocase complex. Interacts with the SecYEG preprotein conducting channel. Has a central role in coupling the hydrolysis of ATP to the transfer of proteins into and across the cell membrane, serving as an ATP-driven molecular motor driving the stepwise translocation of polypeptide chains across the membrane. This chain is Protein translocase subunit SecA, found in Mycoplasmoides gallisepticum (strain R(low / passage 15 / clone 2)) (Mycoplasma gallisepticum).